The following is a 127-amino-acid chain: Longitudinals lacking protein-like (127 aa).

The 66-residue stretch at 33-98 (TDVTLACEGQ…MYAGEVNVSQ (66 aa)) folds into the BTB domain.

As to quaternary structure, the BTB domain interacts with the BTB domain of Trl in vitro. Found in a Pc-containing complex.

The protein localises to the nucleus. Required, together with Trl, for maintaining the repressed state of target genes including homeotic genes Scr and Ubx. May also be involved in the activation of homeotic genes. Binds to a DNA Polycomb response element (PRE) at the bithorax complex. Also binds to polytene chromosomes at several hundred sites, many of which are shared with Trl and ph-p. Required during embryonic development. The sequence is that of Longitudinals lacking protein-like from Drosophila melanogaster (Fruit fly).